The chain runs to 477 residues: Metallopeptidase AprA (477 aa).

The N-terminal stretch at 1-20 is a signal peptide; the sequence is MSKAKDKAIVSAAQASTAYS. Residue His183 coordinates Zn(2+). The active site involves Glu184. Residues His187 and His193 each coordinate Zn(2+). Ca(2+)-binding residues include Arg264, Gly266, Thr268, Asp296, Gly298, Gly299, Asp301, Thr338, Glu340, Gly345, Gly347, Asp349, Asn354, Ala356, Asn358, Gly362, Gly363, Ala364, Gly365, Asp367, Gly371, Ala372, Gly373, Gly374, Asp376, Gly380, Gly381, Ala382, Gly383, Asp385, Asp394, Asp401, Asp411, Asp453, Ser455, and Asp461. Hemolysin-type calcium-binding repeat units lie at residues 343–360, 361–378, and 379–391; these read FGGAGNDLIIGNNAANVI, KGGAGNDLIYGAGGADQL, and WGGAGNDTFVFGA.

This sequence belongs to the peptidase M10B family. The cofactor is Ca(2+). Zn(2+) serves as cofactor.

It is found in the secreted. Is completely inhibited by the metal cation chelators 1,10-phenanthroline and EDTA, but PMSF, pepstatin A and E-64 have no effect on activity. In terms of biological role, peptidase able to cleave azocasein and the milk substrates beta-casein and Na-caseinate. Can withstand UHT processing of milk, and is able to spoil UHT milk over the storage period. The chain is Metallopeptidase AprA from Pseudomonas marginalis (Pseudomonas panacis).